We begin with the raw amino-acid sequence, 234 residues long: Ubiquinone biosynthesis O-methyltransferase (234 aa).

Residues Arg-36, Gly-56, Asp-77, and Met-125 each coordinate S-adenosyl-L-methionine.

It belongs to the methyltransferase superfamily. UbiG/COQ3 family.

The enzyme catalyses a 3-demethylubiquinol + S-adenosyl-L-methionine = a ubiquinol + S-adenosyl-L-homocysteine + H(+). It catalyses the reaction a 3-(all-trans-polyprenyl)benzene-1,2-diol + S-adenosyl-L-methionine = a 2-methoxy-6-(all-trans-polyprenyl)phenol + S-adenosyl-L-homocysteine + H(+). Its pathway is cofactor biosynthesis; ubiquinone biosynthesis. In terms of biological role, O-methyltransferase that catalyzes the 2 O-methylation steps in the ubiquinone biosynthetic pathway. This is Ubiquinone biosynthesis O-methyltransferase from Actinobacillus pleuropneumoniae serotype 7 (strain AP76).